The chain runs to 285 residues: uncharacterized protein (285 aa).

This sequence belongs to the methyltransferase superfamily.

This is an uncharacterized protein from Mycobacterium tuberculosis (strain CDC 1551 / Oshkosh).